We begin with the raw amino-acid sequence, 538 residues long: Bifunctional purine biosynthesis protein PurH (538 aa).

The region spanning 8–158 (IPAPDKVKIR…KNHAYVTVVT (151 aa)) is the MGS-like domain.

This sequence belongs to the PurH family.

It carries out the reaction (6R)-10-formyltetrahydrofolate + 5-amino-1-(5-phospho-beta-D-ribosyl)imidazole-4-carboxamide = 5-formamido-1-(5-phospho-D-ribosyl)imidazole-4-carboxamide + (6S)-5,6,7,8-tetrahydrofolate. The catalysed reaction is IMP + H2O = 5-formamido-1-(5-phospho-D-ribosyl)imidazole-4-carboxamide. It participates in purine metabolism; IMP biosynthesis via de novo pathway; 5-formamido-1-(5-phospho-D-ribosyl)imidazole-4-carboxamide from 5-amino-1-(5-phospho-D-ribosyl)imidazole-4-carboxamide (10-formyl THF route): step 1/1. The protein operates within purine metabolism; IMP biosynthesis via de novo pathway; IMP from 5-formamido-1-(5-phospho-D-ribosyl)imidazole-4-carboxamide: step 1/1. This is Bifunctional purine biosynthesis protein PurH from Agrobacterium fabrum (strain C58 / ATCC 33970) (Agrobacterium tumefaciens (strain C58)).